Here is a 360-residue protein sequence, read N- to C-terminus: Ethanolamine-phosphate cytidylyltransferase (360 aa).

CTP is bound by residues 207–208, 215–218, Lys243, 291–294, and 321–325; these read GF, HTEA, HGDD, and HTEGL.

This sequence belongs to the cytidylyltransferase family.

It carries out the reaction phosphoethanolamine + CTP + H(+) = CDP-ethanolamine + diphosphate. The protein operates within phospholipid metabolism; phosphatidylethanolamine biosynthesis; phosphatidylethanolamine from ethanolamine: step 2/3. Ethanolamine-phosphate cytidylyltransferase that catalyzes the second step in the synthesis of phosphatidylethanolamine (PE) from ethanolamine via the CDP-ethanolamine pathway. This Dictyostelium discoideum (Social amoeba) protein is Ethanolamine-phosphate cytidylyltransferase (pctA).